The sequence spans 345 residues: Biotin synthase (345 aa).

Residues 59-286 (NEVQLSTLLS…TTMVRLSAGR (228 aa)) form the Radical SAM core domain. Residues cysteine 74, cysteine 78, and cysteine 81 each contribute to the [4Fe-4S] cluster site. Residues cysteine 118, cysteine 149, cysteine 209, and arginine 281 each contribute to the [2Fe-2S] cluster site.

This sequence belongs to the radical SAM superfamily. Biotin synthase family. Homodimer. [4Fe-4S] cluster is required as a cofactor. [2Fe-2S] cluster serves as cofactor.

The enzyme catalyses (4R,5S)-dethiobiotin + (sulfur carrier)-SH + 2 reduced [2Fe-2S]-[ferredoxin] + 2 S-adenosyl-L-methionine = (sulfur carrier)-H + biotin + 2 5'-deoxyadenosine + 2 L-methionine + 2 oxidized [2Fe-2S]-[ferredoxin]. The protein operates within cofactor biosynthesis; biotin biosynthesis; biotin from 7,8-diaminononanoate: step 2/2. Its function is as follows. Catalyzes the conversion of dethiobiotin (DTB) to biotin by the insertion of a sulfur atom into dethiobiotin via a radical-based mechanism. The sequence is that of Biotin synthase from Leptothrix cholodnii (strain ATCC 51168 / LMG 8142 / SP-6) (Leptothrix discophora (strain SP-6)).